The sequence spans 698 residues: Elongation factor G (698 aa).

Residues 8-290 (ERYRNIGISA…AVIEFLPSPV (283 aa)) enclose the tr-type G domain. Residues 17–24 (AHIDAGKT), 88–92 (DTPGH), and 142–145 (NKMD) each bind GTP.

This sequence belongs to the TRAFAC class translation factor GTPase superfamily. Classic translation factor GTPase family. EF-G/EF-2 subfamily.

It is found in the cytoplasm. Catalyzes the GTP-dependent ribosomal translocation step during translation elongation. During this step, the ribosome changes from the pre-translocational (PRE) to the post-translocational (POST) state as the newly formed A-site-bound peptidyl-tRNA and P-site-bound deacylated tRNA move to the P and E sites, respectively. Catalyzes the coordinated movement of the two tRNA molecules, the mRNA and conformational changes in the ribosome. This Azoarcus sp. (strain BH72) protein is Elongation factor G.